The chain runs to 353 residues: Peptide chain release factor 1 (353 aa).

Residue Q230 is modified to N5-methylglutamine.

It belongs to the prokaryotic/mitochondrial release factor family. Methylated by PrmC. Methylation increases the termination efficiency of RF1.

It localises to the cytoplasm. Functionally, peptide chain release factor 1 directs the termination of translation in response to the peptide chain termination codons UAG and UAA. The sequence is that of Peptide chain release factor 1 from Gluconobacter oxydans (strain 621H) (Gluconobacter suboxydans).